The following is a 984-amino-acid chain: Calsyntenin-1 (984 aa).

The N-terminal stretch at 1–18 (MRTAYFIFVGALLGVSYA) is a signal peptide. The Extracellular segment spans residues 19-850 (KHHHAARAPI…VGQGAIAGGA (832 aa)). Cadherin domains follow at residues 66–142 (YLLT…APEI) and 143–257 (ENPW…APGV). Residues Asn206 and Asn305 are each glycosylated (N-linked (GlcNAc...) asparagine). The chain crosses the membrane as a helical span at residues 851–871 (VAVVVVVCVGFLLVLLVIGVL). Residues 872-984 (KMRDTPMPRR…ISTNARSYRV (113 aa)) are Cytoplasmic-facing. Residues 878 to 959 (MPRRRRQKRQ…QTEVLPHLDA (82 aa)) are disordered. Basic and acidic residues predominate over residues 886–896 (RQSDGGMHWDD). Over residues 918 to 951 (EFSDEEEEEETDGESECSYRDEEDDVSEDEEDQT) the composition is skewed to acidic residues.

Belongs to the calsyntenin family. In terms of assembly, interacts with isoform c of daf-2 (daf-2c); promoting daf-2c localization to synaptic regions. Interacts with klc-2. Interacts with unc-104. A proportion of the protein is proteolytically cleaved before the transmembrane domain in neurons, leading to release in the extracellular space. Widely expressed in the nervous system. Highly expressed in many head neurons, including most amphid sensory neurons. Also expressed in other tissues, such as intestine and gonadal sheath cells.

Its subcellular location is the golgi apparatus membrane. The protein localises to the perikaryon. It is found in the cell projection. The protein resides in the axon. It localises to the secreted. Its subcellular location is the synaptic cleft. Cell adhesion molecule involved in associative learning and memory. Acts as a regulator of GABAergic synaptic transmission at neuromuscular junctions by regulating GABA synaptic vesicle precursor transport: possibly functions as a cargo adapter for unc-104-mediated transport of synaptic vesicle precursors. Promotes localization of isoform c of daf-2 (daf-2c) to synaptic regions by acting as a signaling adapter between klc-2 and daf-2c. In terms of biological role, acts as aregulator of glutamate signaling in the sensory neurons by inhibiting the activity of command interneurons, thereby negatively regulating motor circuit activity and locomotion. This is Calsyntenin-1 from Caenorhabditis elegans.